Consider the following 250-residue polypeptide: Coproheme decarboxylase (250 aa).

Fe-coproporphyrin III is bound by residues Arg-131, 145–149 (YPMNK), His-172, and Gln-185. The active site involves Tyr-145.

Belongs to the ChdC family. Type 1 subfamily. Fe-coproporphyrin III is required as a cofactor.

The enzyme catalyses Fe-coproporphyrin III + 2 H2O2 + 2 H(+) = heme b + 2 CO2 + 4 H2O. It carries out the reaction Fe-coproporphyrin III + H2O2 + H(+) = harderoheme III + CO2 + 2 H2O. It catalyses the reaction harderoheme III + H2O2 + H(+) = heme b + CO2 + 2 H2O. The protein operates within porphyrin-containing compound metabolism; protoheme biosynthesis. Involved in coproporphyrin-dependent heme b biosynthesis. Catalyzes the decarboxylation of Fe-coproporphyrin III (coproheme) to heme b (protoheme IX), the last step of the pathway. The reaction occurs in a stepwise manner with a three-propionate intermediate. The sequence is that of Coproheme decarboxylase from Staphylococcus aureus (strain Mu50 / ATCC 700699).